A 176-amino-acid chain; its full sequence is Heme oxygenase HutZ (176 aa).

Residue histidine 170 coordinates heme.

This sequence belongs to the heme oxygenase HugZ/HutZ family. As to quaternary structure, homodimer. Interacts with HutX, leading to the transfer of the heme from HutX to apo-HutZ.

It carries out the reaction heme b + 3 AH2 + 3 O2 + 2 H(+) = biliverdin IXbeta + CO + Fe(2+) + 3 A + 3 H2O. The catalysed reaction is heme b + 3 AH2 + 3 O2 + 3 H(+) = biliverdin IXdelta + CO + Fe(2+) + 3 A + 3 H2O. Activity is pH-dependent. A proximal hydrogen bond between Asp-132 and the heme axial ligant His-170 is essential for heme degradation activity. Heme-degradation reaction is inhibited by iron chelators. Its function is as follows. Involved in heme degradation. Catalyzes the degradation of heme to biliverdin, with the release of iron. Forms biliverdin beta and delta. Binds heme with high efficiency. This chain is Heme oxygenase HutZ, found in Vibrio cholerae serotype O1 (strain ATCC 39315 / El Tor Inaba N16961).